The sequence spans 315 residues: Zinc finger CCCH domain-containing protein 23 (315 aa).

Residues 1–21 are disordered; the sequence is MMIGENKNRPHPTIHIPQWDQ. 2 consecutive C3H1-type zinc fingers follow at residues 131–157 and 165–189; these read YSGT…HGVF and RYRT…HTTE.

This Arabidopsis thaliana (Mouse-ear cress) protein is Zinc finger CCCH domain-containing protein 23.